The chain runs to 176 residues: Probable superoxide oxidase CybB (176 aa).

A run of 4 helical transmembrane segments spans residues 7–27 (CLQI…WSSI), 44–64 (IHFS…LIQL), 85–105 (VGHW…IAIL), and 137–157 (HLLL…AALL). Residues His-13 and His-45 each contribute to the heme b site. Residues His-137 and His-151 each coordinate heme b.

The protein belongs to the cytochrome b561 family. Requires heme b as cofactor.

Its subcellular location is the cell inner membrane. It carries out the reaction a ubiquinol + 2 O2 = 2 superoxide + a ubiquinone + 2 H(+). In terms of biological role, B-type di-heme cytochrome. Catalyzes the oxidation of superoxide to molecular oxygen and transfers the extracted electrons to ubiquinone through the two hemes. In Yersinia pestis, this protein is Probable superoxide oxidase CybB (cybB).